The sequence spans 182 residues: D-lyxose ketol-isomerase (182 aa).

Mn(2+)-binding residues include histidine 74, histidine 76, glutamate 87, and histidine 142.

Belongs to the D-lyxose ketol-isomerase family. In terms of assembly, homodimer. The cofactor is Mn(2+).

It catalyses the reaction D-lyxose = D-xylulose. Sugar isomerase that catalyzes the reversible isomerization of D-lyxose to D-xylulose. Shows weak activity with D-mannose and L-ribose. The sequence is that of D-lyxose ketol-isomerase from Cohnella laeviribosi.